The primary structure comprises 203 residues: Protein GrpE (203 aa).

The span at 1–10 shows a compositional bias: basic and acidic residues; it reads MSNESIKAEQ. A disordered region spans residues 1–20; the sequence is MSNESIKAEQDLIQEGVESE.

It belongs to the GrpE family. As to quaternary structure, homodimer.

It is found in the cytoplasm. Its function is as follows. Participates actively in the response to hyperosmotic and heat shock by preventing the aggregation of stress-denatured proteins, in association with DnaK and GrpE. It is the nucleotide exchange factor for DnaK and may function as a thermosensor. Unfolded proteins bind initially to DnaJ; upon interaction with the DnaJ-bound protein, DnaK hydrolyzes its bound ATP, resulting in the formation of a stable complex. GrpE releases ADP from DnaK; ATP binding to DnaK triggers the release of the substrate protein, thus completing the reaction cycle. Several rounds of ATP-dependent interactions between DnaJ, DnaK and GrpE are required for fully efficient folding. The sequence is that of Protein GrpE from Shewanella sp. (strain MR-7).